The chain runs to 264 residues: Acetyl-coenzyme A carboxylase carboxyl transferase subunit beta (264 aa).

Residues 4 to 264 (LWVKCKQCQQ…CGNSLEGVES (261 aa)) enclose the CoA carboxyltransferase N-terminal domain. Residues Cys-8, Cys-11, Cys-27, and Cys-29 each contribute to the Zn(2+) site. Residues 8-29 (CKQCQQILLTKELEKNLKVCRC) form a C4-type zinc finger.

This sequence belongs to the AccD/PCCB family. Acetyl-CoA carboxylase is a heterohexamer composed of biotin carboxyl carrier protein (AccB), biotin carboxylase (AccC) and two subunits each of ACCase subunit alpha (AccA) and ACCase subunit beta (AccD). It depends on Zn(2+) as a cofactor.

It localises to the cytoplasm. The catalysed reaction is N(6)-carboxybiotinyl-L-lysyl-[protein] + acetyl-CoA = N(6)-biotinyl-L-lysyl-[protein] + malonyl-CoA. It participates in lipid metabolism; malonyl-CoA biosynthesis; malonyl-CoA from acetyl-CoA: step 1/1. Its function is as follows. Component of the acetyl coenzyme A carboxylase (ACC) complex. Biotin carboxylase (BC) catalyzes the carboxylation of biotin on its carrier protein (BCCP) and then the CO(2) group is transferred by the transcarboxylase to acetyl-CoA to form malonyl-CoA. The chain is Acetyl-coenzyme A carboxylase carboxyl transferase subunit beta from Heliobacterium modesticaldum (strain ATCC 51547 / Ice1).